A 719-amino-acid chain; its full sequence is UvrABC system protein B (719 aa).

The region spanning 49–435 (RRINAGERDV…TGGEFVEQVI (387 aa)) is the Helicase ATP-binding domain. 62 to 69 (GATGTGKS) contacts ATP. Residues 115–138 (YYDYYQPEAYIAQTDTYIEKDSSI) carry the Beta-hairpin motif. The Helicase C-terminal domain occupies 453 to 606 (QIDDLIGEIR…QIAYNEANGI (154 aa)). Residues 635–654 (GGSGRNASRGRRAQGEPGRA) form a disordered region. One can recognise a UVR domain in the interval 674-709 (ADLIKDLTAQMMAAARDLQFELAARFRDEIADLKRE).

The protein belongs to the UvrB family. As to quaternary structure, forms a heterotetramer with UvrA during the search for lesions. Interacts with UvrC in an incision complex.

Its subcellular location is the cytoplasm. The UvrABC repair system catalyzes the recognition and processing of DNA lesions. A damage recognition complex composed of 2 UvrA and 2 UvrB subunits scans DNA for abnormalities. Upon binding of the UvrA(2)B(2) complex to a putative damaged site, the DNA wraps around one UvrB monomer. DNA wrap is dependent on ATP binding by UvrB and probably causes local melting of the DNA helix, facilitating insertion of UvrB beta-hairpin between the DNA strands. Then UvrB probes one DNA strand for the presence of a lesion. If a lesion is found the UvrA subunits dissociate and the UvrB-DNA preincision complex is formed. This complex is subsequently bound by UvrC and the second UvrB is released. If no lesion is found, the DNA wraps around the other UvrB subunit that will check the other stand for damage. This chain is UvrABC system protein B, found in Mycobacterium tuberculosis (strain CDC 1551 / Oshkosh).